A 1359-amino-acid chain; its full sequence is Tripeptidyl-peptidase 2 (1359 aa).

The tract at residues 45 to 81 (AASTTTRGGPSPSAGVAPRAMPSSSSSPPSAAEGTTA) is disordered. Positions 64 to 81 (AMPSSSSSPPSAAEGTTA) are enriched in low complexity. Residues 102–600 (EIGVDRFLAA…HGLLQVDRAF (499 aa)) enclose the Peptidase S8 domain. Catalysis depends on charge relay system residues Asp126, His353, and Ser539.

The protein belongs to the peptidase S8 family.

The catalysed reaction is Release of an N-terminal tripeptide from a polypeptide.. Functionally, serine protease that may function in the proteasome pathway. The chain is Tripeptidyl-peptidase 2 (TPP2) from Oryza sativa subsp. japonica (Rice).